Here is a 239-residue protein sequence, read N- to C-terminus: Apoptosis regulator Bcl-2 (239 aa).

The BH4 motif lies at 10-30 (DNREIVMKYIHYKLSQRGYEW). A disordered region spans residues 39–85 (PPGAAPAPGIFSSQPGHTPHPAASRDPVARTSPLQTPAAPGAAAGPA). Position 69 is a phosphothreonine; by MAPK8 (threonine 69). Residue serine 70 is modified to Phosphoserine; by MAPK8 and PKC. Low complexity predominate over residues 75-85 (PAAPGAAAGPA). Residue serine 87 is modified to Phosphoserine; by MAPK8. A required for interaction with SEPTIN4 isoform ARTS. Required XIAP-mediated ubiquitination and apoptosis region spans residues 92-107 (VVHLTLRQAGDDFSRR). Residues 93 to 107 (VHLTLRQAGDDFSRR) carry the BH3 motif. A BH1 motif is present at residues 136-155 (ELFRDGVNWGRIVAFFEFGG). Positions 187-202 (TWIQDNGGWDAFVELY) match the BH2 motif. The chain crosses the membrane as a helical span at residues 212–233 (FSWLSLKTLLSLALVGACITLG).

Belongs to the Bcl-2 family. Forms homodimers, and heterodimers with BAX, BAD, BAK and Bcl-X(L). Heterodimerization with BAX requires intact BH1 and BH2 motifs, and is necessary for anti-apoptotic activity. Part of a complex composed of SEPTIN4 isoform ARTS, XIAP and BCL2, within the complex interacts (via BH3 domain) with SEPTIN4 isoform ARTS and XIAP, SEPTIN4 isoform ARTS acts as a scaffold protein and stabilizes the complex. Component of the complex, at least composed of LRPPRC, BECN1 and BCL2; the interactions prevent BECN1 from forming an autophagy-inducing complex with PIK3C3. Interacts with EI24. Also interacts with APAF1, BBC3, BCL2L1, BNIPL, MRPL41 and TP53BP2. Binding to FKBP8 seems to target BCL2 to the mitochondria and probably interferes with the binding of BCL2 to its targets. Interacts with BAG1 in an ATP-dependent manner. Interacts with RAF1 (the 'Ser-338' and 'Ser-339' phosphorylated form). Interacts (via the BH4 domain) with EGLN3; the interaction prevents the formation of the BAX-BCL2 complex and inhibits the anti-apoptotic activity of BCL2. Interacts with G0S2; this interaction also prevents the formation of the anti-apoptotic BAX-BCL2 complex. Interacts with RTL10/BOP. Interacts with the SCF(FBXO10) complex. Interacts (via the loop between motifs BH4 and BH3) with NLRP1 (via LRR repeats), but not with NLRP2, NLRP3, NLRP4, PYCARD, nor MEFV. Interacts with GIMAP3/IAN4, GIMAP4/IAN1 and GIMAP5/IAN5. Interacts with BCAP31. Interacts with IRF3; the interaction is inhibited by Sendai virus infection. Interacts with BECN1; thereby inhibiting autophagy in non-starvation conditions. Interacts with AMBRA1; thereby inhibiting autophagy. As to quaternary structure, (Microbial infection) Interacts with Toxoplasma gondii ROP17; the interaction probably promotes BCL2 phosphorylation and degradation. In terms of processing, phosphorylation/dephosphorylation on Ser-70 regulates anti-apoptotic activity. Growth factor-stimulated phosphorylation on Ser-70 by PKC is required for the anti-apoptosis activity and occurs during the G2/M phase of the cell cycle. In the absence of growth factors, BCL2 appears to be phosphorylated by other protein kinases such as ERKs and stress-activated kinases. Phosphorylated by MAPK8/JNK1 at Thr-69, Ser-70 and Ser-87, which stimulates starvation-induced autophagy. Dephosphorylated by protein phosphatase 2A (PP2A). Post-translationally, proteolytically cleaved by caspases during apoptosis. The cleaved protein, lacking the BH4 motif, has pro-apoptotic activity, causes the release of cytochrome c into the cytosol promoting further caspase activity. Monoubiquitinated by PRKN, leading to an increase in its stability. Ubiquitinated by SCF(FBXO10), leading to its degradation by the proteasome. Ubiquitinated by XIAP, leading to its degradation by the proteasome. In terms of tissue distribution, expressed in a variety of tissues.

It localises to the mitochondrion outer membrane. The protein resides in the nucleus membrane. It is found in the endoplasmic reticulum membrane. The protein localises to the cytoplasm. Its function is as follows. Suppresses apoptosis in a variety of cell systems including factor-dependent lymphohematopoietic and neural cells. Regulates cell death by controlling the mitochondrial membrane permeability. Appears to function in a feedback loop system with caspases. Inhibits caspase activity either by preventing the release of cytochrome c from the mitochondria and/or by binding to the apoptosis-activating factor (APAF-1). Also acts as an inhibitor of autophagy: interacts with BECN1 and AMBRA1 during non-starvation conditions and inhibits their autophagy function. May attenuate inflammation by impairing NLRP1-inflammasome activation, hence CASP1 activation and IL1B release. This chain is Apoptosis regulator Bcl-2 (BCL2), found in Homo sapiens (Human).